Reading from the N-terminus, the 209-residue chain is Protein GrpE (209 aa).

A compositionally biased stretch (basic and acidic residues) spans 1-18 (MKIFNKDGNKNSKEDTKA). The interval 1 to 60 (MKIFNKDGNKNSKEDTKAGAENSEAQNSGSSAEEVNKARENPEEASASSEAEKSPEVKCQ) is disordered. The span at 23-33 (SEAQNSGSSAE) shows a compositional bias: polar residues. The segment covering 50 to 60 (EAEKSPEVKCQ) has biased composition (basic and acidic residues).

This sequence belongs to the GrpE family. In terms of assembly, homodimer.

It is found in the cytoplasm. Its function is as follows. Participates actively in the response to hyperosmotic and heat shock by preventing the aggregation of stress-denatured proteins, in association with DnaK and GrpE. It is the nucleotide exchange factor for DnaK and may function as a thermosensor. Unfolded proteins bind initially to DnaJ; upon interaction with the DnaJ-bound protein, DnaK hydrolyzes its bound ATP, resulting in the formation of a stable complex. GrpE releases ADP from DnaK; ATP binding to DnaK triggers the release of the substrate protein, thus completing the reaction cycle. Several rounds of ATP-dependent interactions between DnaJ, DnaK and GrpE are required for fully efficient folding. In Methanosarcina barkeri (strain Fusaro / DSM 804), this protein is Protein GrpE.